A 255-amino-acid polypeptide reads, in one-letter code: Hydroxyacylglutathione hydrolase (255 aa).

7 residues coordinate Zn(2+): His-56, His-58, Asp-60, His-61, His-114, Asp-133, and His-171.

Belongs to the metallo-beta-lactamase superfamily. Glyoxalase II family. In terms of assembly, monomer. Requires Zn(2+) as cofactor.

The catalysed reaction is an S-(2-hydroxyacyl)glutathione + H2O = a 2-hydroxy carboxylate + glutathione + H(+). It participates in secondary metabolite metabolism; methylglyoxal degradation; (R)-lactate from methylglyoxal: step 2/2. Thiolesterase that catalyzes the hydrolysis of S-D-lactoyl-glutathione to form glutathione and D-lactic acid. The chain is Hydroxyacylglutathione hydrolase from Roseobacter denitrificans (strain ATCC 33942 / OCh 114) (Erythrobacter sp. (strain OCh 114)).